The following is a 135-amino-acid chain: Cilia- and flagella-associated protein 144 (135 aa).

The disordered stretch occupies residues 76 to 100; the sequence is QGPKKKYSETQTEAQEIGWDPNPLI.

The protein belongs to the CFAP144 family. Microtubule inner protein component of sperm flagellar doublet microtubules. As to expression, predominantly expressed in tissues containing motile cilia.

The protein resides in the cytoplasm. It is found in the cytoskeleton. Its subcellular location is the cilium axoneme. The protein localises to the flagellum axoneme. In Mus musculus (Mouse), this protein is Cilia- and flagella-associated protein 144.